The chain runs to 78 residues: Large ribosomal subunit protein bL28 (78 aa).

Positions 1 to 21 are disordered; that stretch reads MSRVCQVTGKRPVSGNNRSHA.

It belongs to the bacterial ribosomal protein bL28 family.

This chain is Large ribosomal subunit protein bL28, found in Sodalis glossinidius (strain morsitans).